We begin with the raw amino-acid sequence, 260 residues long: Putative nudix hydrolase 6 (260 aa).

The region spanning 113-257 (PNHAADPIVS…SHFIDLLKES (145 aa)) is the Nudix hydrolase domain. The Nudix box signature appears at 148-170 (GMVDAGEHVSQTLRREFAEEAMH). Mg(2+)-binding residues include glutamate 163 and glutamate 167.

Belongs to the Nudix hydrolase family. The cofactor is Mg(2+). Requires Mn(2+) as cofactor.

Functionally, probably mediates the hydrolysis of some nucleoside diphosphate derivatives. This chain is Putative nudix hydrolase 6 (ndx-6), found in Caenorhabditis elegans.